Here is a 1273-residue protein sequence, read N- to C-terminus: ABC transporter B family member 2 (1273 aa).

The signal sequence occupies residues 1–30 (MYISLIFFLSNHFPPLISIPIFIFLSFSSP). 7 helical membrane passes run 66–86 (FSFA…GACI), 91–111 (VPIF…AYLF), 126–146 (FVYL…CWMH), 209–229 (FIAG…VTLS), 230–250 (IVPL…GLIA), 305–325 (GLGL…LVWF), and 345–365 (LNVV…SAFV). An ABC transmembrane type-1 1 domain is found at 77–366 (MTLGSVGACI…AAPDISAFVR (290 aa)). An ABC transporter 1 domain is found at 401–637 (IQFKDATFSY…PDGAYSSLLR (237 aa)). Residue 436–443 (GGSGSGKS) coordinates ATP. N-linked (GlcNAc...) asparagine glycans are attached at residues Asn-466 and Asn-651. One can recognise an ABC transmembrane type-1 2 domain in the interval 710-997 (GVCGTICAFI…TLALAPDLLK (288 aa)). The next 2 helical transmembrane spans lie at 711-731 (VCGT…ALGV) and 752-772 (IAIL…IEHI). N-linked (GlcNAc...) asparagine glycosylation occurs at Asn-806. Transmembrane regions (helical) follow at residues 832 to 852 (ILLQ…ILNW), 934 to 954 (IAGL…GLAL), and 975 to 995 (FMVL…APDL). Residues 1030-1266 (IELKGVHFSY…KSGPYFKLIS (237 aa)) enclose the ABC transporter 2 domain. 1065 to 1072 (GQSGSGKS) is a binding site for ATP. Residues Asn-1217 and Asn-1256 are each glycosylated (N-linked (GlcNAc...) asparagine).

Belongs to the ABC transporter superfamily. ABCB family. Multidrug resistance exporter (TC 3.A.1.201) subfamily. In terms of assembly, interacts with 1-naphthylphthalamic acid (NPA).

The protein localises to the membrane. This Arabidopsis thaliana (Mouse-ear cress) protein is ABC transporter B family member 2 (ABCB2).